A 625-amino-acid polypeptide reads, in one-letter code: tRNA uridine 5-carboxymethylaminomethyl modification enzyme MnmG (625 aa).

Residues 13 to 18 (GGGHAG), V125, and S182 contribute to the FAD site. Residue 276-290 (GPRYCPSIEDKITRF) coordinates NAD(+). Residue Q373 coordinates FAD.

The protein belongs to the MnmG family. Homodimer. Heterotetramer of two MnmE and two MnmG subunits. It depends on FAD as a cofactor.

The protein localises to the cytoplasm. In terms of biological role, NAD-binding protein involved in the addition of a carboxymethylaminomethyl (cmnm) group at the wobble position (U34) of certain tRNAs, forming tRNA-cmnm(5)s(2)U34. This Lactococcus lactis subsp. cremoris (strain MG1363) protein is tRNA uridine 5-carboxymethylaminomethyl modification enzyme MnmG.